Consider the following 702-residue polypeptide: Ribosomal RNA large subunit methyltransferase K/L (702 aa).

The THUMP domain occupies 43 to 154 (LIYQSLMWSR…KETASIALDL (112 aa)).

Belongs to the methyltransferase superfamily. RlmKL family.

The protein resides in the cytoplasm. The enzyme catalyses guanosine(2445) in 23S rRNA + S-adenosyl-L-methionine = N(2)-methylguanosine(2445) in 23S rRNA + S-adenosyl-L-homocysteine + H(+). It carries out the reaction guanosine(2069) in 23S rRNA + S-adenosyl-L-methionine = N(2)-methylguanosine(2069) in 23S rRNA + S-adenosyl-L-homocysteine + H(+). In terms of biological role, specifically methylates the guanine in position 2445 (m2G2445) and the guanine in position 2069 (m7G2069) of 23S rRNA. The chain is Ribosomal RNA large subunit methyltransferase K/L from Salmonella arizonae (strain ATCC BAA-731 / CDC346-86 / RSK2980).